The primary structure comprises 245 residues: High affinity immunoglobulin epsilon receptor subunit alpha (245 aa).

Positions 1-23 are cleaved as a signal peptide; sequence MDTGGSARLCLALVLISLGVMLT. Residues 24-204 are Extracellular-facing; it reads ATQKSVVSLD…DYTIEYRWLQ (181 aa). 2 consecutive Ig-like domains span residues 28–103 and 113–181; these read SVVS…KPVY and LQSS…LNKV. C49 and C91 form a disulfide bridge. N-linked (GlcNAc...) asparagine glycans are attached at residues N52, N53, N58, N65, N123, N158, and N167. C130 and C174 form a disulfide bridge. The chain crosses the membrane as a helical span at residues 205–223; that stretch reads LIFPSLAVILFAVDTGLWF. The Cytoplasmic portion of the chain corresponds to 224–245; the sequence is STHKQFESILKIQKTGKGKKKG.

In terms of assembly, tetramer of an alpha chain, a beta chain, and two disulfide linked gamma chains. Interacts with IGHE (via CH3 region). Expressed in leukocytes and pinealocytes at night (at protein level).

Its subcellular location is the cell membrane. The protein resides in the secreted. Its function is as follows. High-affinity receptor for immunoglobulin epsilon/IgE. Mediates IgE effector functions in myeloid cells. Upon IgE binding and antigen/allergen cross-linking initiates signaling pathways that lead to myeloid cell activation and differentiation. On mast cells, basophils and eosinophils stimulates the secretion of vasoactive amines, lipid mediators and cytokines that contribute to inflammatory response, tissue remodeling and cytotoxicity against microbes. Triggers the immediate hypersensitivity response to allergens as a host defense mechanism against helminth parasites, pathogenic bacteria and venom toxicity. When dysregulated, it can elicit harmful life-threatening allergic and anaphylactic reactions. The sequence is that of High affinity immunoglobulin epsilon receptor subunit alpha (Fcer1a) from Rattus norvegicus (Rat).